The sequence spans 435 residues: MSQKPHLNLIVIGHVDHGKSTLIGRLLMDRGFIDEKTVKEAEEAAKKLGKDSEKYAFLMDRLKEERERGVTINLSFMRFETRKYFFTVIDAPGHRDFVKNMITGASQADAAILVVSAKKGEYEAGMSAEGQTREHIILSKTMGINQVIVAINKMDLADTPYDEKRFKEIVDTVSKFMKSFGFDMNKVKFVPVVAPDGDNVTHKSTKMPWYNGPTLEELLDQLEIPPKPVDKPLRIPIQEVYSISGVGVVPVGRIESGVLKVGDKIVFMPVGKIGEVRSIETHHTKIDKAEPGDNIGFNVRGVEKKDVKRGDVAGSVQNPPTVADEFTAQVIVIWHPTAVGVGYTPVLHVHTASIACRVSEITSRIDPKTGKEAEKNPQFIKAGDSAIVKFKPIKELVAEKFREFPALGRFAMRDMGKTVGVGVIIDVKPRKVEVK.

In terms of domain architecture, tr-type G spans 4-229 (KPHLNLIVIG…DQLEIPPKPV (226 aa)). Residues 13 to 20 (GHVDHGKS) form a G1 region. 13–20 (GHVDHGKS) contributes to the GTP binding site. Ser20 lines the Mg(2+) pocket. The G2 stretch occupies residues 69 to 73 (GVTIN). A G3 region spans residues 90 to 93 (DAPG). Residues 90–94 (DAPGH) and 152–155 (NKMD) contribute to the GTP site. The interval 152-155 (NKMD) is G4. Positions 193–195 (VAP) are G5.

The protein belongs to the TRAFAC class translation factor GTPase superfamily. Classic translation factor GTPase family. EF-Tu/EF-1A subfamily.

It is found in the cytoplasm. The enzyme catalyses GTP + H2O = GDP + phosphate + H(+). In terms of biological role, GTP hydrolase that promotes the GTP-dependent binding of aminoacyl-tRNA to the A-site of ribosomes during protein biosynthesis. The sequence is that of Elongation factor 1-alpha from Sulfolobus acidocaldarius (strain ATCC 33909 / DSM 639 / JCM 8929 / NBRC 15157 / NCIMB 11770).